The following is a 130-amino-acid chain: Small ribosomal subunit protein uS11 (130 aa).

This sequence belongs to the universal ribosomal protein uS11 family. In terms of assembly, part of the 30S ribosomal subunit. Interacts with proteins S7 and S18. Binds to IF-3.

Functionally, located on the platform of the 30S subunit, it bridges several disparate RNA helices of the 16S rRNA. Forms part of the Shine-Dalgarno cleft in the 70S ribosome. This chain is Small ribosomal subunit protein uS11, found in Aliarcobacter butzleri (strain RM4018) (Arcobacter butzleri).